A 273-amino-acid polypeptide reads, in one-letter code: Hydroxyethylthiazole kinase (273 aa).

Residue Met49 participates in substrate binding. Lys125 and Thr171 together coordinate ATP. Substrate is bound at residue Gly198.

The protein belongs to the Thz kinase family. It depends on Mg(2+) as a cofactor.

It carries out the reaction 5-(2-hydroxyethyl)-4-methylthiazole + ATP = 4-methyl-5-(2-phosphooxyethyl)-thiazole + ADP + H(+). It functions in the pathway cofactor biosynthesis; thiamine diphosphate biosynthesis; 4-methyl-5-(2-phosphoethyl)-thiazole from 5-(2-hydroxyethyl)-4-methylthiazole: step 1/1. In terms of biological role, catalyzes the phosphorylation of the hydroxyl group of 4-methyl-5-beta-hydroxyethylthiazole (THZ). This Natranaerobius thermophilus (strain ATCC BAA-1301 / DSM 18059 / JW/NM-WN-LF) protein is Hydroxyethylthiazole kinase.